A 384-amino-acid chain; its full sequence is MNWNKRINHKLNMHIFNKKFRVKVAVQKNNNRIINVNGMQYINFSSNDYLGLRNNARIVQAWKTAATRYGIGSTGSSLITGYSTIHQSLEEKLAKWLDYPKAILFISGYTANTAIISTLIQKNDRIFMDKLSHSSILEPSYNSSGKCYRFIHNNPSSLMNKFYSSSGKNPLIITEGIFSMDGDIAPLSIISSFSKKIKGLLMVDDAHGIGVSGYNGKGSCEQHRVKPDILTITFGKAFGISGAAVLCSNNIAEYLWQFSKHLMFSTAMPIAQAYAIRQALYCIQHADKLRRKLQENINFFLKNSQCLSHLLKCSHTAIQPIIIGDNEETMILSDQLKSKGIWVNAIRPPTVPNKSSRLRITLNALHTKEDIEQLIESIYKLYDR.

Substrate is bound at residue Arg21. Residue 108-109 (GY) participates in pyridoxal 5'-phosphate binding. Residue His133 coordinates substrate. The pyridoxal 5'-phosphate site is built by Ser179, His207, and Thr233. N6-(pyridoxal phosphate)lysine is present on Lys236. Residue Thr350 coordinates substrate.

It belongs to the class-II pyridoxal-phosphate-dependent aminotransferase family. BioF subfamily. In terms of assembly, homodimer. The cofactor is pyridoxal 5'-phosphate.

It carries out the reaction 6-carboxyhexanoyl-[ACP] + L-alanine + H(+) = (8S)-8-amino-7-oxononanoate + holo-[ACP] + CO2. Its pathway is cofactor biosynthesis; biotin biosynthesis. Catalyzes the decarboxylative condensation of pimeloyl-[acyl-carrier protein] and L-alanine to produce 8-amino-7-oxononanoate (AON), [acyl-carrier protein], and carbon dioxide. The protein is 8-amino-7-oxononanoate synthase of Buchnera aphidicola subsp. Baizongia pistaciae (strain Bp).